The chain runs to 239 residues: 7-cyano-7-deazaguanine synthase (239 aa).

Position 12 to 22 (12 to 22 (FSGGQDSATCL)) interacts with ATP. Residues Cys-200, Cys-215, Cys-218, and Cys-221 each contribute to the Zn(2+) site.

Belongs to the QueC family. It depends on Zn(2+) as a cofactor.

The enzyme catalyses 7-carboxy-7-deazaguanine + NH4(+) + ATP = 7-cyano-7-deazaguanine + ADP + phosphate + H2O + H(+). The protein operates within purine metabolism; 7-cyano-7-deazaguanine biosynthesis. In terms of biological role, catalyzes the ATP-dependent conversion of 7-carboxy-7-deazaguanine (CDG) to 7-cyano-7-deazaguanine (preQ(0)). The chain is 7-cyano-7-deazaguanine synthase from Hyphomonas neptunium (strain ATCC 15444).